A 651-amino-acid chain; its full sequence is MAVDDYEELLKYYELHETVGTGGFAKVKLASHLITGEKVAIKIMDKESLGDDLPRVKTEIDAMKNLSHQHVCRLYHVIETPKKIFMVLEYCPGGELFDYIIAKDRLTEEEARVFFRQIVSAVAYIHSQGYAHRDLKPENLLIDEDQNLKLIDFGLCAKPKGGLDYHLMTCCGSPAYAAPELIQGKAYIGSEADIWSMGVLMYALMCGYLPFDDDNVMVLYKKIMRGKYEIPKWLSPGSVLLLSQMMQVDPKKRITVKHLLNHPWLMHGYSCPVEWQSKYPLGYIDEDCVTELSVFYKYSRTSTTRLISEWSYDHITASYLLLHSKKSHGKAVRLKHPLAVGDQAVTSFKELRPKSKLDFEEPNGEIAYVFGSMDFSDEELFSEDFTYSSFEPHTPKEYVKGRLEFNSVDSAPATPVVQRNARHKNEDKENSNTAVARDENVFLHPAPWTPTPRRKQNEKKGILTTPNKNTQTKEKNQSKETPTKKPIGTGEEFANVISPERRCRSVELDLNQAHIDSAQKKKGAKVFGSLERGLDKMITMLTPSKRKGYTREGPRKLRAHYNVTTTNIVNPEQLLNQIVRVLPSKNVDYVQKGYTLKCKTQSDFGKVTMQFELEVCQLSKSEVVGIRRQRLKGDAWVYKRLVEDILSSCKV.

One can recognise a Protein kinase domain in the interval 13–265 (YELHETVGTG…VKHLLNHPWL (253 aa)). ATP-binding positions include 19–27 (VGTGGFAKV) and Lys42. The active-site Proton acceptor is the Asp134. Thr169 is modified (phosphothreonine; by autocatalysis). Residue Ser173 is modified to Phosphoserine; by autocatalysis. The UBA-like stretch occupies residues 284–323 (IDEDCVTELSVFYKYSRTSTTRLISEWSYDHITASYLLLH). Residues 328 to 651 (HGKAVRLKHP…VEDILSSCKV (324 aa)) are autoinhibitory region. The tract at residues 410–490 (SAPATPVVQR…TPTKKPIGTG (81 aa)) is disordered. Thr414 is modified (phosphothreonine). Over residues 423 to 441 (HKNEDKENSNTAVARDENV) the composition is skewed to basic and acidic residues. Phosphothreonine occurs at positions 449, 451, 481, and 483. The segment covering 471–483 (QTKEKNQSKETPT) has biased composition (basic and acidic residues). Phosphoserine is present on residues Ser498, Ser505, and Ser517. The region spanning 602–651 (SDFGKVTMQFELEVCQLSKSEVVGIRRQRLKGDAWVYKRLVEDILSSCKV) is the KA1 domain.

This sequence belongs to the protein kinase superfamily. CAMK Ser/Thr protein kinase family. SNF1 subfamily. Autophosphorylated: autophosphorylation of the T-loop at Thr-169 and Ser-173 is required for activation. Phosphorylated by the maturation promoting factor (MPF), composed of cdk1 and a cyclin-B. Also phosphorylated by some MAPK. Phosphorylated during oocyte maturation. Dephosphorylation destabilizes the protein. There is some ambiguity for some phosphosites: Thr-481/Thr-483 and Ser-505/Ser-517. In terms of processing, degraded when cells exit mitosis.

It is found in the cell membrane. The enzyme catalyses L-seryl-[protein] + ATP = O-phospho-L-seryl-[protein] + ADP + H(+). The catalysed reaction is L-threonyl-[protein] + ATP = O-phospho-L-threonyl-[protein] + ADP + H(+). With respect to regulation, activated by autophosphorylation of the T-loop at Thr-169 and Ser-173: in contrast to other members of the SNF1 subfamily, phosphorylation at Thr-169 is not mediated by STK11/LKB1 but via autophosphorylation instead. In terms of biological role, serine/threonine-protein kinase involved in various processes such as cell cycle regulation, self-renewal of stem cells, apoptosis and splicing regulation. Also plays a role in primitive hematopoiesis, possibly by affecting the expression of genes critical for hematopoiesis. Plays a role in cytokinesis during early development. The chain is Maternal embryonic leucine zipper kinase (melk) from Xenopus laevis (African clawed frog).